The primary structure comprises 765 residues: Ankyrin repeat and protein kinase domain-containing protein 1 (765 aa).

Residues Glu22–Leu289 form the Protein kinase domain. Residues Val28–Val36 and Lys51 each bind ATP. The active-site Proton acceptor is Asp145. ANK repeat units lie at residues Asn361 to Cys390, Ser394 to Arg423, Asp427 to Ala456, Glu460 to Leu489, Glu493 to Ala522, Asn526 to Ala555, Ser559 to Leu588, Gln592 to Ala621, Val625 to Ala654, Ser658 to Ala687, Val691 to Val720, and Val724 to Thr753.

Belongs to the protein kinase superfamily. TKL Ser/Thr protein kinase family. As to expression, highly expressed in brain and weakly expressed in placenta and spinal cord.

It carries out the reaction L-seryl-[protein] + ATP = O-phospho-L-seryl-[protein] + ADP + H(+). It catalyses the reaction L-threonyl-[protein] + ATP = O-phospho-L-threonyl-[protein] + ADP + H(+). The protein is Ankyrin repeat and protein kinase domain-containing protein 1 (ANKK1) of Homo sapiens (Human).